We begin with the raw amino-acid sequence, 191 residues long: Chorion class B protein Ld34 (191 aa).

The N-terminal stretch at 1–21 (MSAKIILVFCAQALFVQSALS) is a signal peptide.

Belongs to the chorion protein family.

Functionally, this protein is one of many from the eggshell of the gypsy moth. This Lymantria dispar (Gypsy moth) protein is Chorion class B protein Ld34.